The primary structure comprises 141 residues: Hemoglobin subunit alpha (141 aa).

Residues 1–141 enclose the Globin domain; sequence VLSPADKTNV…VSTVLTSKYR (141 aa). Residue S3 is modified to Phosphoserine. At K7 the chain carries N6-succinyllysine. T8 is modified (phosphothreonine). K11 is modified (N6-succinyllysine). Residue K16 is modified to N6-acetyllysine; alternate. K16 bears the N6-succinyllysine; alternate mark. A Phosphotyrosine modification is found at Y24. S35 carries the post-translational modification Phosphoserine. An N6-succinyllysine modification is found at K40. S49 bears the Phosphoserine mark. H58 serves as a coordination point for O2. A heme b-binding site is contributed by H87. Phosphoserine is present on S102. The residue at position 108 (T108) is a Phosphothreonine. S124 and S131 each carry phosphoserine. Residues T134 and T137 each carry the phosphothreonine modification. S138 carries the phosphoserine modification.

The protein belongs to the globin family. Heterotetramer of two alpha chains and two beta chains. As to expression, red blood cells.

In terms of biological role, involved in oxygen transport from the lung to the various peripheral tissues. Hemopressin acts as an antagonist peptide of the cannabinoid receptor CNR1. Hemopressin-binding efficiently blocks cannabinoid receptor CNR1 and subsequent signaling. This is Hemoglobin subunit alpha (HBA) from Urocitellus parryii (Arctic ground squirrel).